Reading from the N-terminus, the 366-residue chain is tRNA/tmRNA (uracil-C(5))-methyltransferase (366 aa).

Positions 190, 218, 223, 239, and 299 each coordinate S-adenosyl-L-methionine. Residue Cys324 is the Nucleophile of the active site. Residue Glu358 is the Proton acceptor of the active site.

Belongs to the class I-like SAM-binding methyltransferase superfamily. RNA M5U methyltransferase family. TrmA subfamily.

The catalysed reaction is uridine(54) in tRNA + S-adenosyl-L-methionine = 5-methyluridine(54) in tRNA + S-adenosyl-L-homocysteine + H(+). It carries out the reaction uridine(341) in tmRNA + S-adenosyl-L-methionine = 5-methyluridine(341) in tmRNA + S-adenosyl-L-homocysteine + H(+). In terms of biological role, dual-specificity methyltransferase that catalyzes the formation of 5-methyluridine at position 54 (m5U54) in all tRNAs, and that of position 341 (m5U341) in tmRNA (transfer-mRNA). The sequence is that of tRNA/tmRNA (uracil-C(5))-methyltransferase from Salmonella paratyphi B (strain ATCC BAA-1250 / SPB7).